We begin with the raw amino-acid sequence, 209 residues long: Tektin bundle-interacting protein 1 (209 aa).

Microtubule inner protein component of sperm flagellar doublet microtubules.

Its subcellular location is the cytoplasm. It is found in the cytoskeleton. The protein localises to the cilium axoneme. It localises to the flagellum axoneme. Its function is as follows. Microtubule inner protein (MIP) part of the dynein-decorated doublet microtubules (DMTs) in cilia axoneme, which is required for motile cilia beating. Located at the center of the tektin bundle where may function to recruit tektins or stabilize the bundle. The polypeptide is Tektin bundle-interacting protein 1 (Homo sapiens (Human)).